Reading from the N-terminus, the 181-residue chain is Nucleoside diphosphate kinase, mitochondrial (181 aa).

Positions 1-10 (MFRGGTHRLR) are enriched in basic residues. The interval 1-22 (MFRGGTHRLRGQPGLSLPHGPR) is disordered. The transit peptide at 1-24 (MFRGGTHRLRGQPGLSLPHGPRCY) directs the protein to the mitochondrion. ATP contacts are provided by lysine 40, phenylalanine 88, arginine 116, threonine 122, arginine 133, and asparagine 143. Histidine 146 acts as the Pros-phosphohistidine intermediate in catalysis.

It belongs to the NDK family. Mg(2+) serves as cofactor. As to expression, highest levels in the liver and kidney with lower levels in the heart, brain and breast muscle.

Its subcellular location is the mitochondrion intermembrane space. The protein resides in the mitochondrion matrix. It catalyses the reaction a 2'-deoxyribonucleoside 5'-diphosphate + ATP = a 2'-deoxyribonucleoside 5'-triphosphate + ADP. It carries out the reaction a ribonucleoside 5'-diphosphate + ATP = a ribonucleoside 5'-triphosphate + ADP. Feedback inhibition by ADP. Its function is as follows. Major role in the synthesis of nucleoside triphosphates other than ATP. The ATP gamma phosphate is transferred to the NDP beta phosphate via a ping-pong mechanism, using a phosphorylated active-site intermediate. Through the catalyzed exchange of gamma-phosphate between di- and triphosphonucleosides participates in regulation of intracellular nucleotide homeostasis. Binds to anionic phospholipids, predominantly to cardiolipin; the binding inhibits its phosphotransfer activity. Acts as a mitochondria-specific NDK coupled to respiration. Promotes the redistribution of cardiolipin between the mitochondrial inner membrane and outer membrane which is implicated in pro-apoptotic signaling. This chain is Nucleoside diphosphate kinase, mitochondrial (NME4), found in Columba livia (Rock dove).